The primary structure comprises 379 residues: Cystathionine gamma-lyase (379 aa).

N6-(pyridoxal phosphate)lysine is present on K195.

The protein belongs to the trans-sulfuration enzymes family. It depends on pyridoxal 5'-phosphate as a cofactor.

It catalyses the reaction L,L-cystathionine + H2O = 2-oxobutanoate + L-cysteine + NH4(+). It carries out the reaction L-homocysteine + H2O = 2-oxobutanoate + hydrogen sulfide + NH4(+) + H(+). In terms of biological role, catalyzes the conversion of cystathionine to cysteine, and homocysteine to sulfide. The chain is Cystathionine gamma-lyase (mccB) from Bacillus subtilis (strain 168).